A 42-amino-acid chain; its full sequence is Serine protease inhibitor 8 (42 aa).

This sequence belongs to the protease inhibitor I3 (leguminous Kunitz-type inhibitor) family. Cortex of potato tuber.

Functionally, potent inhibitor of animal pancreatic trypsin (serine protease). The chain is Serine protease inhibitor 8 from Solanum tuberosum (Potato).